The sequence spans 639 residues: 1-deoxy-D-xylulose-5-phosphate synthase (639 aa).

Residues H79 and 120–122 contribute to the thiamine diphosphate site; that span reads AHS. Position 151 (D151) interacts with Mg(2+). Thiamine diphosphate is bound by residues 152–153, N180, Y289, and E371; that span reads GA. N180 lines the Mg(2+) pocket.

This sequence belongs to the transketolase family. DXPS subfamily. As to quaternary structure, homodimer. The cofactor is Mg(2+). Thiamine diphosphate is required as a cofactor.

It carries out the reaction D-glyceraldehyde 3-phosphate + pyruvate + H(+) = 1-deoxy-D-xylulose 5-phosphate + CO2. It participates in metabolic intermediate biosynthesis; 1-deoxy-D-xylulose 5-phosphate biosynthesis; 1-deoxy-D-xylulose 5-phosphate from D-glyceraldehyde 3-phosphate and pyruvate: step 1/1. Catalyzes the acyloin condensation reaction between C atoms 2 and 3 of pyruvate and glyceraldehyde 3-phosphate to yield 1-deoxy-D-xylulose-5-phosphate (DXP). The chain is 1-deoxy-D-xylulose-5-phosphate synthase from Allorhizobium ampelinum (strain ATCC BAA-846 / DSM 112012 / S4) (Agrobacterium vitis (strain S4)).